The sequence spans 445 residues: tRNA(Ile)-lysidine synthase (445 aa).

Residue 33–38 (SGGLDS) participates in ATP binding.

Belongs to the tRNA(Ile)-lysidine synthase family.

The protein localises to the cytoplasm. The enzyme catalyses cytidine(34) in tRNA(Ile2) + L-lysine + ATP = lysidine(34) in tRNA(Ile2) + AMP + diphosphate + H(+). Ligates lysine onto the cytidine present at position 34 of the AUA codon-specific tRNA(Ile) that contains the anticodon CAU, in an ATP-dependent manner. Cytidine is converted to lysidine, thus changing the amino acid specificity of the tRNA from methionine to isoleucine. The sequence is that of tRNA(Ile)-lysidine synthase from Pseudomonas syringae pv. tomato (strain ATCC BAA-871 / DC3000).